The following is an 825-amino-acid chain: Putative NAD(+)--arginine ADP-ribosyltransferase Mav (825 aa).

Residues 435–673 (ALKGLKKPPG…SGSDHHLPLH (239 aa)) form a disordered region. Composition is skewed to pro residues over residues 443-457 (PGVPKPPEVKPPAAP) and 468-491 (SGKPGPVAPSGKPAPGPADGPLPH). A compositionally biased stretch (low complexity) spans 560 to 579 (PAADTPAPSAPAASMSAASG). Pro residues predominate over residues 580-589 (PPMPPTPSLP). The span at 590–599 (EPASLPSGPS) shows a compositional bias: low complexity. Residues 650–825 (KNANGHGPHD…GRTIIEMIER (176 aa)) form the TR mART core domain. The segment covering 656–670 (GPHDASLDSGSDHHL) has biased composition (basic and acidic residues). NAD(+)-binding positions include 687–699 (TGPGYQELNFALR), 730–733 (RGTN), and Glu750. The active site involves Arg730. Residues Ser755 and Glu795 contribute to the active site. Glu795 serves as a coordination point for NAD(+).

It belongs to the Arg-specific ADP-ribosyltransferase family.

Its subcellular location is the secreted. The catalysed reaction is L-arginyl-[protein] + NAD(+) = N(omega)-(ADP-D-ribosyl)-L-arginyl-[protein] + nicotinamide + H(+). Its function is as follows. A probable mono(ADP-ribosyl)transferase, it may ADP-ribosylate Arg in target protein(s). This chain is Putative NAD(+)--arginine ADP-ribosyltransferase Mav, found in Mycobacterium avium (strain 104).